Consider the following 372-residue polypeptide: MTQPINGPDNPGRCFIGLMSGTSMDGVDGVLLRLDGAPHLLASVSLDIPPSLRATLLALNSSGPDELHRAALAANELARLYAQACAQLRQAAPEARVRAIGAHGQTVRHRPDLGYTVQLNAPALLAELSGIDVVADFRSRDVAAGGQGAPLVPPFHDAMFGGRGAPRAVLNLGGIGNVTLLAPGQAPRGFDTGPANVLLDAWCHAHTGKHYDHNGNWAATGSVSKALLHHLLNSEPWFDLPAPKSTGRDLFGLGWLHKHLDSSGLRLSPQDVQATLVELTAQTVARAIASEPIQDLLVCGGGARNPAIMQALARALPCPVAPTDSEGVPGQWVEAMAFAWLAQAFIDRLPAGLPGVTGARGPRVLGALYPAA.

21-28 serves as a coordination point for ATP; sequence GTSMDGVD.

The protein belongs to the anhydro-N-acetylmuramic acid kinase family.

The catalysed reaction is 1,6-anhydro-N-acetyl-beta-muramate + ATP + H2O = N-acetyl-D-muramate 6-phosphate + ADP + H(+). It functions in the pathway amino-sugar metabolism; 1,6-anhydro-N-acetylmuramate degradation. The protein operates within cell wall biogenesis; peptidoglycan recycling. Its function is as follows. Catalyzes the specific phosphorylation of 1,6-anhydro-N-acetylmuramic acid (anhMurNAc) with the simultaneous cleavage of the 1,6-anhydro ring, generating MurNAc-6-P. Is required for the utilization of anhMurNAc either imported from the medium or derived from its own cell wall murein, and thus plays a role in cell wall recycling. The protein is Anhydro-N-acetylmuramic acid kinase of Bordetella avium (strain 197N).